Consider the following 232-residue polypeptide: Cytidylate kinase (232 aa).

Residue 10–18 (GPAASGKST) participates in ATP binding.

This sequence belongs to the cytidylate kinase family. Type 1 subfamily.

It is found in the cytoplasm. The enzyme catalyses CMP + ATP = CDP + ADP. It catalyses the reaction dCMP + ATP = dCDP + ADP. The sequence is that of Cytidylate kinase from Phytoplasma mali (strain AT).